A 227-amino-acid polypeptide reads, in one-letter code: ATP-dependent dethiobiotin synthetase BioD (227 aa).

Residue 13-18 participates in ATP binding; it reads DAGKTT. Thr-17 serves as a coordination point for Mg(2+). Residue Lys-38 is part of the active site. ATP is bound by residues Asp-55, 118–121, 178–179, 207–209, and Glu-214; these read EGAG, NR, and PYI. Positions 55 and 118 each coordinate Mg(2+).

It belongs to the dethiobiotin synthetase family. In terms of assembly, homodimer. Mg(2+) is required as a cofactor.

The protein localises to the cytoplasm. It carries out the reaction (7R,8S)-7,8-diammoniononanoate + CO2 + ATP = (4R,5S)-dethiobiotin + ADP + phosphate + 3 H(+). It functions in the pathway cofactor biosynthesis; biotin biosynthesis; biotin from 7,8-diaminononanoate: step 1/2. In terms of biological role, catalyzes a mechanistically unusual reaction, the ATP-dependent insertion of CO2 between the N7 and N8 nitrogen atoms of 7,8-diaminopelargonic acid (DAPA, also called 7,8-diammoniononanoate) to form a ureido ring. The chain is ATP-dependent dethiobiotin synthetase BioD from Tolumonas auensis (strain DSM 9187 / NBRC 110442 / TA 4).